We begin with the raw amino-acid sequence, 359 residues long: UDP-N-acetylglucosamine--N-acetylmuramyl-(pentapeptide) pyrophosphoryl-undecaprenol N-acetylglucosamine transferase (359 aa).

UDP-N-acetyl-alpha-D-glucosamine-binding positions include 15-17 (TGG), N127, R166, S191, I245, 264-269 (ALTVSE), and Q290.

It belongs to the glycosyltransferase 28 family. MurG subfamily.

It localises to the cell inner membrane. The enzyme catalyses di-trans,octa-cis-undecaprenyl diphospho-N-acetyl-alpha-D-muramoyl-L-alanyl-D-glutamyl-meso-2,6-diaminopimeloyl-D-alanyl-D-alanine + UDP-N-acetyl-alpha-D-glucosamine = di-trans,octa-cis-undecaprenyl diphospho-[N-acetyl-alpha-D-glucosaminyl-(1-&gt;4)]-N-acetyl-alpha-D-muramoyl-L-alanyl-D-glutamyl-meso-2,6-diaminopimeloyl-D-alanyl-D-alanine + UDP + H(+). It functions in the pathway cell wall biogenesis; peptidoglycan biosynthesis. Functionally, cell wall formation. Catalyzes the transfer of a GlcNAc subunit on undecaprenyl-pyrophosphoryl-MurNAc-pentapeptide (lipid intermediate I) to form undecaprenyl-pyrophosphoryl-MurNAc-(pentapeptide)GlcNAc (lipid intermediate II). This chain is UDP-N-acetylglucosamine--N-acetylmuramyl-(pentapeptide) pyrophosphoryl-undecaprenol N-acetylglucosamine transferase, found in Pseudomonas putida (strain GB-1).